The chain runs to 626 residues: Probable potassium transport system protein Kup (626 aa).

Helical transmembrane passes span 11–31, 55–75, 103–123, 140–160, 171–191, 216–236, 250–270, 282–302, 340–360, 369–389, 395–415, and 422–442; these read FLTL…TSPL, LSLI…VFVM, AWII…GMIT, AALS…LFLI, LFGP…FVSL, LGFA…ALYA, WFAV…ALLI, LLVP…ATVI, IYAP…VLAF, AYGL…LVVA, WPGL…LSFL, and LGDG…VMST.

This sequence belongs to the HAK/KUP transporter (TC 2.A.72) family.

It localises to the cell inner membrane. The enzyme catalyses K(+)(in) + H(+)(in) = K(+)(out) + H(+)(out). Its function is as follows. Transport of potassium into the cell. Likely operates as a K(+):H(+) symporter. In Methylococcus capsulatus (strain ATCC 33009 / NCIMB 11132 / Bath), this protein is Probable potassium transport system protein Kup.